A 272-amino-acid polypeptide reads, in one-letter code: Rhamnulose-1-phosphate aldolase (272 aa).

Glu117 is an active-site residue. Zn(2+)-binding residues include His141, His143, and His212.

Belongs to the aldolase class II family. RhaD subfamily. Requires Zn(2+) as cofactor.

It is found in the cytoplasm. The catalysed reaction is L-rhamnulose 1-phosphate = (S)-lactaldehyde + dihydroxyacetone phosphate. It participates in carbohydrate degradation; L-rhamnose degradation; glycerone phosphate from L-rhamnose: step 3/3. Its function is as follows. Catalyzes the reversible cleavage of L-rhamnulose-1-phosphate to dihydroxyacetone phosphate (DHAP) and L-lactaldehyde. This chain is Rhamnulose-1-phosphate aldolase, found in Mannheimia succiniciproducens (strain KCTC 0769BP / MBEL55E).